We begin with the raw amino-acid sequence, 107 residues long: Small ribosomal subunit protein bS6 (107 aa).

This sequence belongs to the bacterial ribosomal protein bS6 family.

Its function is as follows. Binds together with bS18 to 16S ribosomal RNA. The chain is Small ribosomal subunit protein bS6 from Synechococcus elongatus (strain ATCC 33912 / PCC 7942 / FACHB-805) (Anacystis nidulans R2).